A 367-amino-acid chain; its full sequence is MFPQRSSELYRTPVTHQPPPALELAGNLEYPNLNIADLNARLENLSPRLHDCWDSIAINDHNHLALATNRREGRQWWGMLFGYGRDQMHHMSVDSANFKLQAEHTVNIVRYAEDDFLLVALGDTRLQAWSTYSKVRDSQSPYCLFLVGESSAHPTPISQLSVFKADPRTAVSGSADSTLNVWDLSGADMVSTYRSRSSHTDKLTGLATPAASVDKFVTCDRGGCARLWDVRAAAPSSTCLYADASHVLSFTSAAWAAASELQGDNHIYLGDYDGKVHTLDIRVPRKLAETREYFDKGHVAQLLINGPHLAAMSNLPASVKVANVQAGHEFIYTHQDTHSRLTDAVWTDDSTLITIGHGRKMVTHAIK.

WD repeat units follow at residues 101 to 139 (QAEHTVNIVRYAEDDFLLVALGDTRLQAWSTYSKVRDSQ), 152 to 192 (AHPT…MVST), and 198 to 238 (SHTD…PSST). The interval 309–367 (LAAMSNLPASVKVANVQAGHEFIYTHQDTHSRLTDAVWTDDSTLITIGHGRKMVTHAIK) is interaction with csul.

As to quaternary structure, interacts with csul and tud. In oocytes, localizes to pole plasm and nuage (at protein level). Expressed stronger in the germline than in somatic cells. In the germarium it sometimes concentrates in perinuclear aggregates that disappear by stage 2 of oogenesis. At later stages, it is uniformly distributed in the nurse cells and oocyte, as well as in young embryos, with no particular enrichment at the posterior or inside the pole cells (at protein level).

Its subcellular location is the cytoplasm. Its function is as follows. Involved in specific localization of cytoplasmic proteins during the formation of pole plasm. Required for synthesis and/or stability of oskar protein (osk) and localization of tudor (tud) in both the nuage and posterior pole of the oocyte. Required for normal posterior localization of osk in later stages of oogenesis and for posterior localization of the vasa (vas) protein during the entire process of pole plasm assembly. May act by regulating the complex that contains the arginine N-methyltransferase csul. The protein is Protein valois (vls) of Drosophila melanogaster (Fruit fly).